The chain runs to 164 residues: Lipoprotein signal peptidase (164 aa).

A run of 3 helical transmembrane segments spans residues Trp12–Gln32, Trp70–Ser90, and Ala102–Val122. Residues Asp123 and Asp141 contribute to the active site. The chain crosses the membrane as a helical span at residues Phe137–Leu157.

It belongs to the peptidase A8 family.

The protein localises to the cell inner membrane. The catalysed reaction is Release of signal peptides from bacterial membrane prolipoproteins. Hydrolyzes -Xaa-Yaa-Zaa-|-(S,diacylglyceryl)Cys-, in which Xaa is hydrophobic (preferably Leu), and Yaa (Ala or Ser) and Zaa (Gly or Ala) have small, neutral side chains.. The protein operates within protein modification; lipoprotein biosynthesis (signal peptide cleavage). Functionally, this protein specifically catalyzes the removal of signal peptides from prolipoproteins. This chain is Lipoprotein signal peptidase, found in Escherichia coli O157:H7.